Reading from the N-terminus, the 208-residue chain is Small ribosomal subunit protein uS4 (208 aa).

The segment at 30–51 (KSSLEKRPYAPGQHGQRRSKIS) is disordered. In terms of domain architecture, S4 RNA-binding spans 98–161 (RRLDNVVYRM…KNNPQVQRSI (64 aa)).

The protein belongs to the universal ribosomal protein uS4 family. In terms of assembly, part of the 30S ribosomal subunit. Contacts protein S5. The interaction surface between S4 and S5 is involved in control of translational fidelity.

In terms of biological role, one of the primary rRNA binding proteins, it binds directly to 16S rRNA where it nucleates assembly of the body of the 30S subunit. Its function is as follows. With S5 and S12 plays an important role in translational accuracy. The protein is Small ribosomal subunit protein uS4 of Wolinella succinogenes (strain ATCC 29543 / DSM 1740 / CCUG 13145 / JCM 31913 / LMG 7466 / NCTC 11488 / FDC 602W) (Vibrio succinogenes).